Consider the following 382-residue polypeptide: SAT4 family membrane protein (382 aa).

Positions 1 to 22 (MFGAELVGRETGGQSTDQPYSY) are disordered. Residue Asn78 is glycosylated (N-linked (GlcNAc...) asparagine). 2 consecutive transmembrane segments (helical) span residues 80-100 (SQIL…LLYL) and 112-132 (YLSI…NFFL). N-linked (GlcNAc...) asparagine glycosylation occurs at Asn147. The next 3 membrane-spanning stretches (helical) occupy residues 159-179 (ILVT…LPII), 192-212 (LGIS…IMRL), and 228-248 (WYTE…PTFF). Asn269 carries an N-linked (GlcNAc...) asparagine glycan.

It belongs to the SAT4 family.

It localises to the membrane. This Emericella nidulans (strain FGSC A4 / ATCC 38163 / CBS 112.46 / NRRL 194 / M139) (Aspergillus nidulans) protein is SAT4 family membrane protein.